A 1098-amino-acid chain; its full sequence is Sister-chromatid cohesion protein 3 (1098 aa).

The disordered stretch occupies residues 1–68; it reads MEDSPQGLKR…RSRTHPPQQN (68 aa). Residues 245 to 265 are a coiled coil; it reads RVDSLNKRLSVTHEQITTLED. Positions 275-360 constitute an SCD domain; that stretch reads FVHRYRDIDN…QRFSNRMIEM (86 aa). Coiled coils occupy residues 632–653, 888–908, and 1009–1032; these read KLKD…EVKD, LESL…GREE, and LETL…ANVR. Positions 1027–1077 are disordered; it reads EAANVRRRGRPRKRPETERKRLFDEQSGSDEDESISGGSDREDKLDEDAPL. Residues 1040-1050 show a composition bias toward basic and acidic residues; that stretch reads RPETERKRLFD.

Belongs to the SCC3 family. As to quaternary structure, part of the cohesin complex. Interacts with DEK3. Expressed in roots, mature leaves, buds and seedlings.

Its subcellular location is the nucleus. The protein resides in the chromosome. Functionally, essential component of cohesin complex, a complex required for the cohesion of sister chromatids after DNA replication. The cohesin complex apparently forms a large proteinaceous ring within which sister chromatids can be trapped. At anaphase, the complex is cleaved and dissociates from chromatin, allowing sister chromatids to segregate. The cohesin complex may also play a role in spindle pole assembly during mitosis. Required for centromere cohesion maintenance at anaphase I and for the monopolar orientation of the kinetochores during both male and female meiosis. Also involved in mitosis. This chain is Sister-chromatid cohesion protein 3, found in Arabidopsis thaliana (Mouse-ear cress).